The sequence spans 625 residues: Sphingomyelin phosphodiesterase (625 aa).

The tract at residues Met1 to Ala20 is disordered. The N-terminal stretch at Met1–Ala40 is a signal peptide. The Saposin B-type domain occupies Trp81–Asp165. Asn82 carries an N-linked (GlcNAc...) asparagine glycan. 3 cysteine pairs are disulfide-bonded: Cys85–Cys161, Cys88–Cys153, and Cys116–Cys127. Asn171 carries N-linked (GlcNAc...) asparagine glycosylation. The Zn(2+) site is built by Asp202 and His204. 2 disulfides stabilise this stretch: Cys217-Cys222 and Cys223-Cys246. Zn(2+) contacts are provided by Asp274 and Asn314. N-linked (GlcNAc...) asparagine glycans are attached at residues Asn331 and Asn391. A disulfide bond links Cys381 and Cys427. Positions 421, 453, and 455 each coordinate Zn(2+). Asn499 carries an N-linked (GlcNAc...) asparagine glycan. Phosphoserine is present on Ser504. Residue Asn516 is glycosylated (N-linked (GlcNAc...) asparagine). Intrachain disulfides connect Cys580-Cys584 and Cys590-Cys603.

Belongs to the acid sphingomyelinase family. In terms of assembly, monomer. Interacts with SORT1; the interaction is required for SMPD1 targeting to lysosomes. Zn(2+) is required as a cofactor. Proteolytically processed. Mature lysosomal form arises from C-terminal proteolytic processing of pro-sphingomyelin phosphodiesterase. Post-translationally, both lysosomal and secreted forms are glycosylated but they show a differential pattern of glycosylation. In terms of processing, phosphorylated at Ser-504 by PRKCD upon stress stimuli. Phosphorylation is required for secretion. This form is generated following cleavage by CASP7 in the extracellular milieu. It shows increased activity.

It is found in the lysosome. The protein localises to the lipid droplet. It localises to the secreted. The protein resides in the extracellular space. It carries out the reaction a sphingomyelin + H2O = phosphocholine + an N-acylsphing-4-enine + H(+). The enzyme catalyses N-(octadecanoyl)-sphing-4-enine-1-phosphocholine + H2O = N-octadecanoylsphing-4-enine + phosphocholine + H(+). The catalysed reaction is a 1,2-diacyl-sn-glycero-3-phosphocholine + H2O = phosphocholine + a 1,2-diacyl-sn-glycerol + H(+). It catalyses the reaction 1,2-dihexadecanoyl-sn-glycero-3-phosphocholine + H2O = 1,2-dihexadecanoyl-sn-glycerol + phosphocholine + H(+). With respect to regulation, hydrolysis of liposomal sphingomyelin is stimulated by incorporation of diacylglycerol (DAG), ceramide and free fatty acids into the liposomal membranes. Phosphatidylcholine hydrolysis is inhibited by incorporation of cholesterol, ceramide, DAG, monoacylglycerol and fatty acids. Functionally, converts sphingomyelin to ceramide. Exists as two enzymatic forms that arise from alternative trafficking of a single protein precursor, one that is targeted to the endolysosomal compartment, whereas the other is released extracellularly. However, in response to various forms of stress, lysosomal exocytosis may represent a major source of the secretory form. In the lysosomes, converts sphingomyelin to ceramide. Plays an important role in the export of cholesterol from the intraendolysosomal membranes. Also has phospholipase C activities toward 1,2-diacylglycerolphosphocholine and 1,2-diacylglycerolphosphoglycerol. Modulates stress-induced apoptosis through the production of ceramide. Its function is as follows. When secreted, modulates cell signaling with its ability to reorganize the plasma membrane by converting sphingomyelin to ceramide. Secreted form is increased in response to stress and inflammatory mediators such as IL1B, IFNG or TNF as well as upon infection with bacteria and viruses. Produces the release of ceramide in the outer leaflet of the plasma membrane playing a central role in host defense. Ceramide reorganizes these rafts into larger signaling platforms that are required to internalize bacteria, induce apoptosis and regulate the cytokine response in infected cells. In wounded cells, the lysosomal form is released extracellularly in the presence of Ca(2+) and promotes endocytosis and plasma membrane repair. In terms of biological role, this form is generated following cleavage by CASP7 in the extracellular milieu in response to bacterial infection. It shows increased ability to convert sphingomyelin to ceramide and promotes plasma membrane repair. Plasma membrane repair by ceramide counteracts the action of gasdermin-D (GSDMD) perforin (PRF1) pores that are formed in response to bacterial infection. The sequence is that of Sphingomyelin phosphodiesterase (SMPD1) from Bos taurus (Bovine).